The chain runs to 384 residues: Mitogen-activated protein kinase homolog 1 (384 aa).

A Protein kinase domain is found at 32–319 (YVPIKPIGRG…VMEALQHPYM (288 aa)). Residues 38–46 (IGRGAYGIV) and Lys-61 contribute to the ATP site. Asp-158 acts as the Proton acceptor in catalysis. The residue at position 191 (Thr-191) is a Phosphothreonine. A TXY motif is present at residues 191-193 (TEY). Position 193 is a phosphotyrosine (Tyr-193).

The protein belongs to the protein kinase superfamily. CMGC Ser/Thr protein kinase family. MAP kinase subfamily. It depends on Mg(2+) as a cofactor. Post-translationally, dually phosphorylated on Thr-191 and Tyr-193, which activates the enzyme. As to expression, expressed in vegetative organs such as leaf, root, or stem. In the reproductive organs, it is found in the ovary, but not in the stamen.

It catalyses the reaction L-seryl-[protein] + ATP = O-phospho-L-seryl-[protein] + ADP + H(+). It carries out the reaction L-threonyl-[protein] + ATP = O-phospho-L-threonyl-[protein] + ADP + H(+). Its activity is regulated as follows. Activated by tyrosine and threonine phosphorylation. In Petunia hybrida (Petunia), this protein is Mitogen-activated protein kinase homolog 1 (MPK1).